Here is a 185-residue protein sequence, read N- to C-terminus: Homeobox expressed in ES cells 1 (185 aa).

Positions 108–167 form a DNA-binding region, homeobox; sequence GRRPRTAFTQNQIEVLENVFRVNCYPGIDIREDLAQKLNLEEDRIQIWFQNRRAKLKRSH.

The protein belongs to the ANF homeobox family. As to quaternary structure, can form heterodimers with PROP1 in binding to DNA. Interacts with TLE1.

Its subcellular location is the nucleus. Functionally, required for the normal development of the forebrain, eyes and other anterior structures such as the olfactory placodes and pituitary gland. Possible transcriptional repressor. Binds to the palindromic PIII sequence, 5'-AGCTTGAGTCTAATTGAATTAACTGTAC-3'. HESX1 and PROP1 bind as heterodimers on this palindromic site, and, in vitro, HESX1 can antagonize PROP1 activation. This is Homeobox expressed in ES cells 1 (HESX1) from Pan troglodytes (Chimpanzee).